Here is a 114-residue protein sequence, read N- to C-terminus: Adapter SH3BGRL (114 aa).

Residues 13-50 are required for interaction with HER2; that stretch reads SMAIKKKQQDVLGFLEANKIGFEEKDIAANEENRKWMR. Residues 54 to 71 are required for interaction with PFN1, HER2, and ATG12; the sequence is PENSRPATGYPLPPQIFN. The short motif at 61–67 is the SH3-binding element; that stretch reads TGYPLPP.

The protein belongs to the SH3BGR family. Monomer. Interacts with PFN1/Profilin-1. Interacts with ERBB2. Interacts with ATG12. Interacts with BECN1. Interacts with translating ribosomes.

The protein localises to the cytoplasm. It localises to the cytosol. Its subcellular location is the cell membrane. Functionally, appears to function as an adapter protein that bridges proteins together or proteins with mRNAs. May function as a ubiquitin ligase-substrate adapter. Additionally, associates with translating cytoplasmic ribosomes and may promote the expression of specific mRNAs. The chain is Adapter SH3BGRL (SH3BGRL) from Bos taurus (Bovine).